A 204-amino-acid polypeptide reads, in one-letter code: MRIILASSSPRRRQLMELLGIEFEVEKPDVEEEFLESPEETVRELSLRKAEWVFKKRKEEEILVIGSDTVVVLDGNILGKPESLEEAKGMLKKLSGKWHVVYTGVAFVSSETKDVIVSSTKVRFRELPESVIDYYVEKYRPLDKAGAYGIQDFAAVFVEKIEGDFFTVVGFPLGMVWQYLYEKGWWKVASKREDDKGGARVAFG.

Asp68 (proton acceptor) is an active-site residue.

The protein belongs to the Maf family. YhdE subfamily. A divalent metal cation is required as a cofactor.

The protein resides in the cytoplasm. It catalyses the reaction dTTP + H2O = dTMP + diphosphate + H(+). The enzyme catalyses UTP + H2O = UMP + diphosphate + H(+). Functionally, nucleoside triphosphate pyrophosphatase that hydrolyzes dTTP and UTP. May have a dual role in cell division arrest and in preventing the incorporation of modified nucleotides into cellular nucleic acids. This chain is dTTP/UTP pyrophosphatase, found in Thermotoga maritima (strain ATCC 43589 / DSM 3109 / JCM 10099 / NBRC 100826 / MSB8).